The chain runs to 294 residues: Keratin-like protein KRT222 (294 aa).

One can recognise an IF rod domain in the interval 1 to 150; it reads MELSQLLNEI…RLLEQEEIRY (150 aa). The stretch at 1–151 forms a coiled coil; sequence MELSQLLNEI…LLEQEEIRYY (151 aa).

This sequence belongs to the intermediate filament family.

The chain is Keratin-like protein KRT222 (Krt222) from Mus musculus (Mouse).